Here is a 357-residue protein sequence, read N- to C-terminus: CD4+ T-cell-stimulating antigen (357 aa).

Positions 1–22 (MKKRTFALALSMIIASGVILGA) are cleaved as a signal peptide. C23 carries N-palmitoyl cysteine lipidation. C23 is lipidated: S-diacylglycerol cysteine.

It belongs to the BMP lipoprotein family.

It is found in the cell membrane. In Listeria monocytogenes serovar 1/2a (strain ATCC BAA-679 / EGD-e), this protein is CD4+ T-cell-stimulating antigen (tcsA).